The primary structure comprises 215 residues: Cytochrome b6 (215 aa).

Residues Ile32–Phe52 traverse the membrane as a helical segment. Cys35 is a heme c binding site. 2 residues coordinate heme b: His86 and His100. 3 helical membrane passes run Ala90–Phe110, Leu116–Tyr136, and Leu186–Ile206. Heme b-binding residues include His187 and His202.

The protein belongs to the cytochrome b family. PetB subfamily. As to quaternary structure, the 4 large subunits of the cytochrome b6-f complex are cytochrome b6, subunit IV (17 kDa polypeptide, PetD), cytochrome f and the Rieske protein, while the 4 small subunits are PetG, PetL, PetM and PetN. The complex functions as a dimer. Heme b serves as cofactor. Requires heme c as cofactor.

The protein resides in the plastid. The protein localises to the chloroplast thylakoid membrane. Component of the cytochrome b6-f complex, which mediates electron transfer between photosystem II (PSII) and photosystem I (PSI), cyclic electron flow around PSI, and state transitions. The chain is Cytochrome b6 from Chlorella vulgaris (Green alga).